A 393-amino-acid chain; its full sequence is Riboflavin biosynthesis protein RibBA (393 aa).

The DHBP synthase stretch occupies residues methionine 1–lysine 200. D-ribulose 5-phosphate contacts are provided by residues arginine 27–glutamate 28, aspartate 32, arginine 139–threonine 143, and glutamate 163. Glutamate 28 contacts Mg(2+). Residue histidine 142 participates in Mg(2+) binding. The tract at residues leucine 201–isoleucine 393 is GTP cyclohydrolase II. Arginine 249–alanine 253 is a GTP binding site. Zn(2+)-binding residues include cysteine 254, cysteine 265, and cysteine 267. Residues glutamine 270, glutamate 291–arginine 293, and threonine 313 contribute to the GTP site. Aspartate 325 serves as the catalytic Proton acceptor; for GTP cyclohydrolase activity. Arginine 327 (nucleophile; for GTP cyclohydrolase activity) is an active-site residue. GTP is bound by residues serine 348 and lysine 353.

In the N-terminal section; belongs to the DHBP synthase family. It in the C-terminal section; belongs to the GTP cyclohydrolase II family. Mg(2+) is required as a cofactor. The cofactor is Mn(2+). Requires Zn(2+) as cofactor.

It catalyses the reaction D-ribulose 5-phosphate = (2S)-2-hydroxy-3-oxobutyl phosphate + formate + H(+). It carries out the reaction GTP + 4 H2O = 2,5-diamino-6-hydroxy-4-(5-phosphoribosylamino)-pyrimidine + formate + 2 phosphate + 3 H(+). It functions in the pathway cofactor biosynthesis; riboflavin biosynthesis; 2-hydroxy-3-oxobutyl phosphate from D-ribulose 5-phosphate: step 1/1. The protein operates within cofactor biosynthesis; riboflavin biosynthesis; 5-amino-6-(D-ribitylamino)uracil from GTP: step 1/4. Functionally, catalyzes the conversion of D-ribulose 5-phosphate to formate and 3,4-dihydroxy-2-butanone 4-phosphate. Catalyzes the conversion of GTP to 2,5-diamino-6-ribosylamino-4(3H)-pyrimidinone 5'-phosphate (DARP), formate and pyrophosphate. The protein is Riboflavin biosynthesis protein RibBA of Staphylococcus aureus (strain Mu50 / ATCC 700699).